The following is a 392-amino-acid chain: HORMA domain-containing protein 1 (392 aa).

One can recognise an HORMA domain in the interval 25 to 227 (QQSLMFVKRL…TPFHTFRLKV (203 aa)). Disordered stretches follow at residues 271 to 292 (IKTKMNEQNENSGTSEIKEPNL) and 371 to 392 (LESSSQESVLKRRRVSEPNEHT). The residue at position 374 (serine 374) is a Phosphoserine. Residues 381-384 (KRRR) carry the Nuclear localization signal motif.

In terms of assembly, interacts with HORMAD2. Interacts with IHO1. Post-translationally, phosphorylated at Ser-375 in a SPO11-dependent manner.

The protein localises to the nucleus. It localises to the chromosome. Its function is as follows. Plays a key role in meiotic progression. Regulates 3 different functions during meiosis: ensures that sufficient numbers of processed DNA double-strand breaks (DSBs) are available for successful homology search by increasing the steady-state numbers of single-stranded DSB ends. Promotes synaptonemal-complex formation independently of its role in homology search. Plays a key role in the male mid-pachytene checkpoint and the female meiotic prophase checkpoint: required for efficient build-up of ATR activity on unsynapsed chromosome regions, a process believed to form the basis of meiotic silencing of unsynapsed chromatin (MSUC) and meiotic prophase quality control in both sexes. The chain is HORMA domain-containing protein 1 (Hormad1) from Rattus norvegicus (Rat).